The sequence spans 468 residues: Glutamate--tRNA ligase (468 aa).

The 'HIGH' region signature appears at 11 to 21 (PSPTGFIHLGN). Residues 243–247 (KMSKR) carry the 'KMSKS' region motif. Residue Lys-246 participates in ATP binding.

The protein belongs to the class-I aminoacyl-tRNA synthetase family. Glutamate--tRNA ligase type 1 subfamily. As to quaternary structure, monomer.

The protein resides in the cytoplasm. It carries out the reaction tRNA(Glu) + L-glutamate + ATP = L-glutamyl-tRNA(Glu) + AMP + diphosphate. Functionally, catalyzes the attachment of glutamate to tRNA(Glu) in a two-step reaction: glutamate is first activated by ATP to form Glu-AMP and then transferred to the acceptor end of tRNA(Glu). In Delftia acidovorans (strain DSM 14801 / SPH-1), this protein is Glutamate--tRNA ligase.